Reading from the N-terminus, the 329-residue chain is Trem-like transcript 2 protein (329 aa).

Positions 1–24 (MEPWPLTFLLLLLLLLWLQGCVSG) are cleaved as a signal peptide. The 102-residue stretch at 25–126 (HSNENLYRKV…HFYPLVGFQL (102 aa)) folds into the Ig-like V-type domain. At 25-270 (HSNENLYRKV…NRSQETYIPA (246 aa)) the chain is on the extracellular side. Disulfide bonds link Cys-46/Cys-110 and Cys-61/Cys-68. The disordered stretch occupies residues 202 to 259 (FIDTSGTVTEPERNTESQPATLSPSNARSFSADPVTTSTMSRHQSSSLSTTGTCHPLT). The segment covering 217 to 259 (ESQPATLSPSNARSFSADPVTTSTMSRHQSSSLSTTGTCHPLT) has biased composition (polar residues). An N-linked (GlcNAc...) asparagine glycan is attached at Asn-261. A helical transmembrane segment spans residues 271-291 (MVVVLTFLPAPVVLVVAYGFW). Residues 292–329 (KKRHMGRYNLGSNYAKPWIHLPEGPETPWKPAWSKITQ) are Cytoplasmic-facing.

In terms of assembly, interacts with CD276 and this interaction enhances T-cell activation. In terms of tissue distribution, detected in B-lymphocytes and macrophages. Detected in spleen, lymph nodes, blood, bone marrow and cells from the peritoneal cavity (at protein level).

It is found in the cell membrane. Functionally, cell surface receptor that may play a role in the innate and adaptive immune response. Acts as a counter-receptor for CD276 and interaction with CD276 on T-cells enhances T-cell activation. The protein is Trem-like transcript 2 protein (Treml2) of Mus musculus (Mouse).